The following is a 1211-amino-acid chain: MARHGDTRSPSPVGSTYSSSRRSRRDDDRYEKSRRDDLRSYRRSRSPERRYRDRDRDSYRRRDRSVDRRDDHRDEDSYRSSRRDRSRDRRRSRDRGDDRDHRRKSRERDYRSRRDDSRDRARRRTDDSADLKHKSRRDDSRTRNLDSKPREASKPSTPAPTAPTEDEKRAERLAKLEAWKQKQAAERERKQREAAAAGGARSILEEIDRKSGLSPAVGSPQSPATPTTDATPTPYSGKFDPKAIVRNAAPAPSTPAVLGNDVAVPQSAKASASSSSMNNHVQANKHPAANSTTSCKLYIPTIRFLQIANVTCTATSTVKRNVGGFGLGAKQVADAEKSSAVKTLGFGEEESKRKKLERLPTPPLEDAKDDMGAVDAAVEDEDDVDMQDGGTEEENAAAARAAAERREERLQSEALRAQSKEAALQSNGDVEMNDVPHQAESEKMEVDAAEEEVDPLDAFMSELAETAPPKKTTGARFTKAKDQQPEAMFGDEHDVDLTAVGEGDADDFLAIANKAKKKKDIPTVDHEKMEYEPFRKKFYTEPSNLAEMTDEEAASLRLELDGIKVRGVDVPKPVMKWSQCGLGVQTLDVIQKLGYENPTSIQSQAIPAIMSGRDVIGVAKTGSGKTIAFLIPMFRHIRDQRPLENMEGPIGLIMTPTRELATQIHKDCKPFLKALNLRAVCAYGGAPIKDQIAELKRGAEIVVCTPGRMIDLLAANAGRVTNLRRVTYVVLDEADRMFDMGFEPQVMKIMANIRPDRQTVLFSATFPRNMEALARKSLTKPIEIVVGGKSVVAPEITQIVEVRNEDTKFVRLLEILGNLYSDDANEDARALIFVDRQEAADTLLRELMRKGYPCMSIHGGKDQIDRDSTIEDFKAGIFPVLIATSVAARGLDVKQLKLVVNYDAPNHLEDYVHRAGRTGRAGNTGTAVTFLTEEQERYSVDIAKALRQSGQKVPEPVQKMVDSFLEKVKAGKEKASASGFGGKGLERLDQERDAARMRERRTYKTGEEGEDEEDKEDKAEKADERFSKIVSSVQSAAAAATTPLPGVPKGIDLDGKITVHRTEKDPAGASKNPLDKVGSAVADIHARLSRAGVMRSGVPIDNRGPDAGAFHATLEINDFPQKARWAVTNRTNVAKILEATGTSITTKGSFYPAGKEPGPGENPKLYILVEGETELAVTNAMRELMRLLKEGTLAAADSDARAPVGGRYNVV.

Disordered regions lie at residues 1 to 240 (MARH…GKFD) and 344 to 429 (LGFG…SNGD). Over residues 8-20 (RSPSPVGSTYSSS) the composition is skewed to low complexity. 3 stretches are compositionally biased toward basic and acidic residues: residues 24–87 (RRDD…DRSR), 94–153 (DRGD…REAS), and 165–193 (EDEK…KQRE). The span at 219-234 (SPQSPATPTTDATPTP) shows a compositional bias: low complexity. A compositionally biased stretch (acidic residues) spans 377 to 395 (AVEDEDDVDMQDGGTEEEN). The span at 402 to 411 (AAERREERLQ) shows a compositional bias: basic and acidic residues. A Q motif motif is present at residues 575–603 (MKWSQCGLGVQTLDVIQKLGYENPTSIQS). The 179-residue stretch at 606-784 (IPAIMSGRDV…RKSLTKPIEI (179 aa)) folds into the Helicase ATP-binding domain. 619 to 626 (AKTGSGKT) contributes to the ATP binding site. The DEAD box signature appears at 732 to 735 (DEAD). One can recognise a Helicase C-terminal domain in the interval 811–961 (RLLEILGNLY…KVPEPVQKMV (151 aa)). The segment at 975 to 1023 (ASASGFGGKGLERLDQERDAARMRERRTYKTGEEGEDEEDKEDKAEKAD) is disordered. Over residues 984-1007 (GLERLDQERDAARMRERRTYKTGE) the composition is skewed to basic and acidic residues.

The protein belongs to the DEAD box helicase family. DDX46/PRP5 subfamily.

The protein localises to the nucleus. It carries out the reaction ATP + H2O = ADP + phosphate + H(+). ATP-dependent RNA helicase involved spliceosome assembly and in nuclear splicing. Catalyzes an ATP-dependent conformational change of U2 snRNP. Bridges U1 and U2 snRNPs and enables stable U2 snRNP association with intron RNA. This chain is Pre-mRNA-processing ATP-dependent RNA helicase prp5 (prp5), found in Aspergillus fumigatus (strain ATCC MYA-4609 / CBS 101355 / FGSC A1100 / Af293) (Neosartorya fumigata).